The following is a 720-amino-acid chain: Nucleoporin 88 (720 aa).

Residues 584–611 adopt a coiled-coil conformation; sequence LALCREDRKSLTEAAERLADKYEDAKYR.

As to expression, widely expressed. Higher levels of expression are detected in highly proliferative frontal regions of the embryo, e.g. brain, eye and anterior trunk.

It is found in the nucleus. The protein localises to the nuclear pore complex. Functionally, component of the nuclear pore complex. The protein is Nucleoporin 88 of Danio rerio (Zebrafish).